The chain runs to 661 residues: Threonine--tRNA ligase (661 aa).

Residues 1–64 form the TGS domain; sequence MSHSVSLTFP…ADGKIEIVTR (64 aa). Residues 245–547 form a catalytic region; that stretch reads DHRRLGREMD…LLENYAGHMP (303 aa). Residues cysteine 341, histidine 392, and histidine 524 each contribute to the Zn(2+) site.

The protein belongs to the class-II aminoacyl-tRNA synthetase family. As to quaternary structure, homodimer. Requires Zn(2+) as cofactor.

Its subcellular location is the cytoplasm. It catalyses the reaction tRNA(Thr) + L-threonine + ATP = L-threonyl-tRNA(Thr) + AMP + diphosphate + H(+). Catalyzes the attachment of threonine to tRNA(Thr) in a two-step reaction: L-threonine is first activated by ATP to form Thr-AMP and then transferred to the acceptor end of tRNA(Thr). Also edits incorrectly charged L-seryl-tRNA(Thr). The polypeptide is Threonine--tRNA ligase (Sinorhizobium fredii (strain NBRC 101917 / NGR234)).